We begin with the raw amino-acid sequence, 310 residues long: Methionyl-tRNA formyltransferase (310 aa).

110 to 113 (SLLP) serves as a coordination point for (6S)-5,6,7,8-tetrahydrofolate.

It belongs to the Fmt family.

It carries out the reaction L-methionyl-tRNA(fMet) + (6R)-10-formyltetrahydrofolate = N-formyl-L-methionyl-tRNA(fMet) + (6S)-5,6,7,8-tetrahydrofolate + H(+). Attaches a formyl group to the free amino group of methionyl-tRNA(fMet). The formyl group appears to play a dual role in the initiator identity of N-formylmethionyl-tRNA by promoting its recognition by IF2 and preventing the misappropriation of this tRNA by the elongation apparatus. This Halorhodospira halophila (strain DSM 244 / SL1) (Ectothiorhodospira halophila (strain DSM 244 / SL1)) protein is Methionyl-tRNA formyltransferase.